A 331-amino-acid polypeptide reads, in one-letter code: 6-phosphogluconolactonase (331 aa).

Lysine 287 is subject to N6-acetyllysine.

This sequence belongs to the cycloisomerase 2 family.

The catalysed reaction is 6-phospho-D-glucono-1,5-lactone + H2O = 6-phospho-D-gluconate + H(+). It functions in the pathway carbohydrate degradation; pentose phosphate pathway; D-ribulose 5-phosphate from D-glucose 6-phosphate (oxidative stage): step 2/3. Its function is as follows. Catalyzes the hydrolysis of 6-phosphogluconolactone to 6-phosphogluconate. The polypeptide is 6-phosphogluconolactonase (Escherichia coli O6:K15:H31 (strain 536 / UPEC)).